The chain runs to 337 residues: MTQPIARSIPLQVVSGDTAAPASLQTGVKQIGGDKINRSPVQFVDAPVLRKPSWIRVRIPSGNAVQNLKAKLRENRLVTVCEEASCPNIHECFSHGTATFMILGEVCTRRCSFCDVAHGRPKPPDASEPTSLATTVADMGLKYVVVTSVDRDDLRDGGAQHFVDCISAIRASAPKTRIEILTPDFRGKGRMDRALEILATSPPDVFNHNIETVPDLYPNVRPGADYQWSLTLLQRFKAQHPTIATKSGIMLGLGETMEQVQATLRDLRAHDVDMITIGQYLQPTPHHHPVMRYWTPEEYKALEDYGNALGFSHVASGPMVRSSYHADRQAAGAGVAA.

Cys-81, Cys-86, Cys-92, Cys-107, Cys-111, Cys-114, and Ser-323 together coordinate [4Fe-4S] cluster. Residues 93 to 312 enclose the Radical SAM core domain; that stretch reads FSHGTATFMI…EDYGNALGFS (220 aa).

This sequence belongs to the radical SAM superfamily. Lipoyl synthase family. Requires [4Fe-4S] cluster as cofactor.

It localises to the cytoplasm. The enzyme catalyses [[Fe-S] cluster scaffold protein carrying a second [4Fe-4S](2+) cluster] + N(6)-octanoyl-L-lysyl-[protein] + 2 oxidized [2Fe-2S]-[ferredoxin] + 2 S-adenosyl-L-methionine + 4 H(+) = [[Fe-S] cluster scaffold protein] + N(6)-[(R)-dihydrolipoyl]-L-lysyl-[protein] + 4 Fe(3+) + 2 hydrogen sulfide + 2 5'-deoxyadenosine + 2 L-methionine + 2 reduced [2Fe-2S]-[ferredoxin]. It participates in protein modification; protein lipoylation via endogenous pathway; protein N(6)-(lipoyl)lysine from octanoyl-[acyl-carrier-protein]: step 2/2. Functionally, catalyzes the radical-mediated insertion of two sulfur atoms into the C-6 and C-8 positions of the octanoyl moiety bound to the lipoyl domains of lipoate-dependent enzymes, thereby converting the octanoylated domains into lipoylated derivatives. The protein is Lipoyl synthase of Xanthomonas campestris pv. campestris (strain B100).